We begin with the raw amino-acid sequence, 346 residues long: Dimethyladenosine transferase 1, mitochondrial (346 aa).

The transit peptide at 1 to 27 directs the protein to the mitochondrion; that stretch reads MAASGKLSTCRLPPLPTIREIIKLLRL. L38, G63, E85, K86, D111, V112, and N141 together coordinate S-adenosyl-L-methionine.

Belongs to the class I-like SAM-binding methyltransferase superfamily. rRNA adenine N(6)-methyltransferase family. KsgA subfamily. As to quaternary structure, interacts with mitochondrial RNA polymerase POLRMT. Interacts with TFAM. Bound to the maturing mtSSU until the late stages of assembly. Ubiquitously expressed.

It is found in the mitochondrion. The catalysed reaction is adenosine(N)/adenosine(N+1) in rRNA + 4 S-adenosyl-L-methionine = N(6)-dimethyladenosine(N)/N(6)-dimethyladenosine(N+1) in rRNA + 4 S-adenosyl-L-homocysteine + 4 H(+). In terms of biological role, mitochondrial methyltransferase which uses S-adenosyl methionine to dimethylate two highly conserved adjacent adenosine residues (A1583 and A1584) within the loop of helix 45 at the 3-prime end of 12S rRNA, thereby regulating the assembly or stability of the small subunit of the mitochondrial ribosome. Also required for basal transcription of mitochondrial DNA, probably via its interaction with POLRMT and TFAM. Stimulates transcription independently of the methyltransferase activity. The protein is Dimethyladenosine transferase 1, mitochondrial of Homo sapiens (Human).